The following is a 775-amino-acid chain: 5-methyltetrahydropteroyltriglutamate--homocysteine methyltransferase (775 aa).

Residues 16–19 (REMK) and K115 contribute to the 5-methyltetrahydropteroyltri-L-glutamate site. L-homocysteine is bound by residues 435–437 (IGS) and E488. L-methionine contacts are provided by residues 435–437 (IGS) and E488. 5-methyltetrahydropteroyltri-L-glutamate contacts are provided by residues 519-520 (RC) and W565. Position 603 (D603) interacts with L-homocysteine. L-methionine is bound at residue D603. E609 serves as a coordination point for 5-methyltetrahydropteroyltri-L-glutamate. Zn(2+) contacts are provided by H645, C647, and E669. Residue H698 is the Proton donor of the active site. C730 contributes to the Zn(2+) binding site.

Belongs to the vitamin-B12 independent methionine synthase family. Requires Zn(2+) as cofactor.

It catalyses the reaction 5-methyltetrahydropteroyltri-L-glutamate + L-homocysteine = tetrahydropteroyltri-L-glutamate + L-methionine. It functions in the pathway amino-acid biosynthesis; L-methionine biosynthesis via de novo pathway; L-methionine from L-homocysteine (MetE route): step 1/1. Catalyzes the transfer of a methyl group from 5-methyltetrahydrofolate to homocysteine resulting in methionine formation. The chain is 5-methyltetrahydropteroyltriglutamate--homocysteine methyltransferase from Coxiella burnetii (strain Dugway 5J108-111).